A 186-amino-acid chain; its full sequence is UPF0340 protein SZO_02480 (186 aa).

Belongs to the UPF0340 family.

This chain is UPF0340 protein SZO_02480, found in Streptococcus equi subsp. zooepidemicus (strain H70).